The chain runs to 497 residues: Cobyrinate a,c-diamide synthase (497 aa).

The GATase cobBQ-type domain maps to 273 to 478 (RIGIALDEAF…AHLHGVAYRE (206 aa)). The Nucleophile role is filled by Cys-355.

This sequence belongs to the CobB/CbiA family. Requires Mg(2+) as cofactor.

It carries out the reaction cob(II)yrinate + 2 L-glutamine + 2 ATP + 2 H2O = cob(II)yrinate a,c diamide + 2 L-glutamate + 2 ADP + 2 phosphate + 2 H(+). It catalyses the reaction Ni-sirohydrochlorin + 2 L-glutamine + 2 ATP + 2 H2O = Ni-sirohydrochlorin a,c-diamide + 2 L-glutamate + 2 ADP + 2 phosphate + 2 H(+). The protein operates within cofactor biosynthesis; adenosylcobalamin biosynthesis; cob(II)yrinate a,c-diamide from sirohydrochlorin (anaerobic route): step 10/10. Catalyzes the ATP-dependent amidation of the two carboxylate groups at positions a and c of cobyrinate, using either L-glutamine or ammonia as the nitrogen source (Potential). Involved in the biosynthesis of the unique nickel-containing tetrapyrrole coenzyme F430, the prosthetic group of methyl-coenzyme M reductase (MCR), which plays a key role in methanogenesis and anaerobic methane oxidation. Catalyzes the ATP-dependent amidation of the two carboxylate groups at positions a and c of Ni-sirohydrochlorin, using L-glutamine or ammonia as the nitrogen source. The polypeptide is Cobyrinate a,c-diamide synthase (Methanosarcina acetivorans (strain ATCC 35395 / DSM 2834 / JCM 12185 / C2A)).